Consider the following 117-residue polypeptide: Appetite-regulating hormone (117 aa).

An N-terminal signal peptide occupies residues 1 to 23; sequence MVSSATICSLLLLSMLWMDMAMA. The O-decanoyl serine; alternate moiety is linked to residue serine 26. The O-hexanoyl serine; alternate moiety is linked to residue serine 26. Serine 26 is lipidated: O-octanoyl serine; alternate. Residues 28-68 are disordered; it reads LSPEHQKAQQRKESKKPPAKLQPRALEGWLHPEDRGQAEEA. The segment covering 31-43 has biased composition (basic and acidic residues); it reads EHQKAQQRKESKK. A propeptide spans 52–75 (removed in mature form); it reads ALEGWLHPEDRGQAEEAEEELEIR. Leucine 98 carries the post-translational modification Leucine amide. The propeptide at 99 to 117 is removed in mature form; that stretch reads GKFLQDILWEEVKEAPANK.

The protein belongs to the motilin family. Post-translationally, O-octanoylated by GOAT/MBOAT4. O-octanoylation is essential for ghrelin activity. The replacement of Ser-26 by aromatic tryptophan preserves ghrelin activity. In terms of processing, amidation of Leu-98 is essential for obestatin activity. As to expression, ghrelin is broadly expressed with higher expression in the stomach. Very low levels are detected in the hypothalamus, heart, lung, pancreas, intestine and adipose tissue. Obestatin is most highly expressed in jejunum, and also found in duodenum, stomach, pituitary, ileum, liver, hypothalamus and heart. Expressed in low levels in pancreas, cerebellum, cerebrum, kidney, testis, ovary colon and lung.

Its subcellular location is the secreted. Its function is as follows. Ghrelin is the ligand for growth hormone secretagogue receptor type 1 (GHSR). Induces the release of growth hormone from the pituitary. Has an appetite-stimulating effect, induces adiposity and stimulates gastric acid secretion. Involved in growth regulation. Obestatin may be the ligand for GPR39. May have an appetite-reducing effect resulting in decreased food intake. May reduce gastric emptying activity and jejunal motility. This is Appetite-regulating hormone (Ghrl) from Rattus norvegicus (Rat).